A 361-amino-acid polypeptide reads, in one-letter code: Beta-hexosaminidase (361 aa).

Substrate is bound by residues aspartate 69, arginine 77, arginine 144, and 174–175; that span reads KH. Histidine 187 (proton donor/acceptor) is an active-site residue. Aspartate 258 (nucleophile) is an active-site residue.

The protein belongs to the glycosyl hydrolase 3 family. NagZ subfamily.

The protein localises to the cytoplasm. It catalyses the reaction Hydrolysis of terminal non-reducing N-acetyl-D-hexosamine residues in N-acetyl-beta-D-hexosaminides.. It functions in the pathway cell wall biogenesis; peptidoglycan recycling. In terms of biological role, plays a role in peptidoglycan recycling by cleaving the terminal beta-1,4-linked N-acetylglucosamine (GlcNAc) from peptide-linked peptidoglycan fragments, giving rise to free GlcNAc, anhydro-N-acetylmuramic acid and anhydro-N-acetylmuramic acid-linked peptides. The sequence is that of Beta-hexosaminidase from Neisseria meningitidis serogroup C / serotype 2a (strain ATCC 700532 / DSM 15464 / FAM18).